Reading from the N-terminus, the 184-residue chain is Tumor necrosis factor alpha-induced protein 8-like protein 2 (184 aa).

Ser3 carries the post-translational modification Phosphoserine.

Belongs to the TNFAIP8 family. TNFAIP8L2 subfamily. May interact with CASP8; however, such result is unclear since could not reproduce the interaction with CASP8. Interacts with RAC1. Phosphorylated by TAK1/MAP3K7; this phosphorylation triggers association with BTRC and subsequent ubiquitination and degradation. Post-translationally, ubiquitinated in a BTRC-depdent manner; leading to degradation mediated through the proteasome pathway.

The protein localises to the cytoplasm. It localises to the nucleus. It is found in the lysosome. Functionally, acts as a negative regulator of innate and adaptive immunity by maintaining immune homeostasis. Plays a regulatory role in the Toll-like signaling pathway by determining the strength of LPS-induced signaling and gene expression. Inhibits TCR-mediated T-cell activation and negatively regulate T-cell function to prevent hyperresponsiveness. Also inhibits autolysosome formation via negatively modulating MTOR activation by interacting with RAC1 and promoting the disassociation of the RAC1-MTOR complex. Plays an essential role in NK-cell biology by acting as a checkpoint and displaying an expression pattern correlating with NK-cell maturation process and by negatively regulating NK-cell maturation and antitumor immunity. Mechanistically, suppresses IL-15-triggered mTOR activity in NK-cells. The protein is Tumor necrosis factor alpha-induced protein 8-like protein 2 (Tnfaip8l2) of Rattus norvegicus (Rat).